The chain runs to 261 residues: Cobalt transport protein CbiM (261 aa).

Positions 1 to 33 are cleaved as a signal peptide; it reads MLRRVLASKRASLILMGMLSFYIIVSASAPAYA. 7 helical membrane passes run 41–61, 76–96, 108–128, 140–160, 172–192, 197–217, and 220–240; these read LPAG…LLGV, LLLA…LPSV, LGSV…VLLF, TLGA…YWIY, IAIF…TSVQ, FPAP…IFAI, and IPLA…LQSY.

It belongs to the CbiM family. As to quaternary structure, forms an energy-coupling factor (ECF) transporter complex composed of an ATP-binding protein (A component, CbiO), a transmembrane protein (T component, CbiQ) and 2 possible substrate-capture proteins (S components, CbiM and CbiN) of unknown stoichimetry.

It is found in the cell inner membrane. The protein operates within cofactor biosynthesis; adenosylcobalamin biosynthesis. In terms of biological role, part of the energy-coupling factor (ECF) transporter complex CbiMNOQ involved in cobalt import. The chain is Cobalt transport protein CbiM from Nostoc sp. (strain PCC 7120 / SAG 25.82 / UTEX 2576).